The chain runs to 333 residues: Large ribosomal subunit protein mL39 (333 aa).

Residues 56 to 122 (DKIEVRYLGL…QESCTLQLLN (67 aa)) enclose the TGS domain. A disordered region spans residues 311–333 (SKKPSPARLPNEPFEEQQQLQLS).

The protein belongs to the mitochondrion-specific ribosomal protein mL39 family. In terms of assembly, component of the mitochondrial ribosome large subunit (39S) which comprises a 16S rRNA and about 50 distinct proteins.

The protein resides in the mitochondrion. The polypeptide is Large ribosomal subunit protein mL39 (mRpL39) (Drosophila melanogaster (Fruit fly)).